Consider the following 475-residue polypeptide: Ankyrin repeat, SAM and basic leucine zipper domain-containing protein 1 (475 aa).

Residues Ser-17, Ser-18, and Ser-20 each carry the phosphoserine modification. 6 ANK repeats span residues 45-74 (EKNETFKKALTTGDISLVQELLDSGISVDT), 78-107 (YGWTPLMYAANVANVEMVQVLLDRGANASF), 110-144 (DKQTILISACSARGTEEQILKCVDLLLSRNADPNM), 148-177 (RLMTPVMYAARNGHPQVVALLVAHGADVNA), 181-210 (NGYTALTWAARQGHKHVVLKLLELGANKMI), and 214-243 (DGKTPSEIAKRNKHVEIFNFLSLTLNPLEG). The SAM domain maps to 272–334 (SYTAFGDLEI…KILAALKELE (63 aa)).

In terms of assembly, interacts with DDX4, PIWIL1, RANBP9 and TDRD1.

It localises to the cytoplasm. In terms of biological role, plays a central role during spermatogenesis by repressing transposable elements and preventing their mobilization, which is essential for the germline integrity. Acts via the piRNA metabolic process, which mediates the repression of transposable elements during meiosis by forming complexes composed of piRNAs and Piwi proteins and governs the methylation and subsequent repression of transposons. Its association with pi-bodies suggests a participation in the primary piRNAs metabolic process. Required prior to the pachytene stage to facilitate the production of multiple types of piRNAs, including those associated with repeats involved in the regulation of retrotransposons. May act by mediating protein-protein interactions during germ cell maturation. The sequence is that of Ankyrin repeat, SAM and basic leucine zipper domain-containing protein 1 (ASZ1) from Atelerix albiventris (Middle-African hedgehog).